A 713-amino-acid polypeptide reads, in one-letter code: Probable tRNA (uracil-O(2)-)-methyltransferase (713 aa).

Disordered stretches follow at residues 49–92 (TLRS…REGT) and 480–508 (LHSRQGHPQSRPGGAHAPSAPQTAAHDAG). Phosphoserine is present on Ser-76. A compositionally biased stretch (basic and acidic residues) spans 79-89 (GEPESGPRASR). Ser-489 carries the post-translational modification Phosphoserine. Residues 669–698 (FKTRICWFFAHHPDGCVLPAAQCPFAHGPE) form a C3H1-type zinc finger.

The protein belongs to the TRM44 family.

It is found in the cytoplasm. It carries out the reaction uridine(44) in tRNA(Ser) + S-adenosyl-L-methionine = 2'-O-methyluridine(44) in tRNA(Ser) + S-adenosyl-L-homocysteine + H(+). Its function is as follows. Probable adenosyl-L-methionine (AdoMet)-dependent tRNA (uracil-O(2)-)-methyltransferase. This Mus musculus (Mouse) protein is Probable tRNA (uracil-O(2)-)-methyltransferase (Trmt44).